Reading from the N-terminus, the 380-residue chain is Polygalacturonase 2 (380 aa).

Residues 1 to 20 (MIAGSKLLMLGLFGALAVHA) form the signal peptide. The propeptide occupies 21 to 38 (LPEPAKAQVTAAPKLEER). A disulfide bond links C42 and C60. 2 PbH1 repeats span residues 173–204 (ATDL…DVGS) and 205–226 (STGI…AVNS). The active-site Proton donor is D219. An intrachain disulfide couples C221 to C237. H241 is an active-site residue. 3 PbH1 repeats span residues 256–277 (VANV…RIKT), 285–307 (VKNV…VIEQ), and 319–364 (TDGV…SVSG). N-linked (GlcNAc...) asparagine glycosylation occurs at N287. 2 cysteine pairs are disulfide-bonded: C347/C352 and C371/C380.

The protein belongs to the glycosyl hydrolase 28 family.

It is found in the secreted. It carries out the reaction (1,4-alpha-D-galacturonosyl)n+m + H2O = (1,4-alpha-D-galacturonosyl)n + (1,4-alpha-D-galacturonosyl)m.. In Penicillium olsonii, this protein is Polygalacturonase 2 (PG2).